The chain runs to 565 residues: Putative serine protease pcp-1 (565 aa).

The first 17 residues, 1 to 17 (MRWFLVLLLVALVSVEA), serve as a signal peptide directing secretion. N-linked (GlcNAc...) asparagine glycosylation is found at Asn69, Asn107, and Asn126. Ser177 (charge relay system) is an active-site residue. N-linked (GlcNAc...) asparagine glycans are attached at residues Asn240, Asn244, Asn257, Asn271, Asn319, and Asn347. Active-site charge relay system residues include Asp451 and His479.

The protein belongs to the peptidase S28 family.

The sequence is that of Putative serine protease pcp-1 (pcp-1) from Caenorhabditis elegans.